A 393-amino-acid chain; its full sequence is GDSL esterase/lipase At1g28600 (393 aa).

The N-terminal stretch at 1–22 (MASLDSLVIFLFSTLFVTIVSS) is a signal peptide. The active-site Nucleophile is Ser38. Residues Asn133 and Asn317 are each glycosylated (N-linked (GlcNAc...) asparagine). Residues Asp340 and His343 contribute to the active site. Asn382 carries N-linked (GlcNAc...) asparagine glycosylation.

The protein belongs to the 'GDSL' lipolytic enzyme family.

It is found in the secreted. In Arabidopsis thaliana (Mouse-ear cress), this protein is GDSL esterase/lipase At1g28600.